The chain runs to 234 residues: Alpha N-terminal protein methyltransferase 1 (234 aa).

S-adenosyl-L-methionine contacts are provided by residues glycine 71, arginine 76, 93–95 (DVV), 120–121 (LQ), and glutamine 136.

It belongs to the methyltransferase superfamily. NTM1 family. In terms of tissue distribution, expressed in uterine cells and PVT neurons of the tail. Expressed in pharynx, intestine and DVB tail neuron.

It carries out the reaction N-terminal L-alanyl-L-prolyl-L-lysyl-[protein] + 3 S-adenosyl-L-methionine = N-terminal N,N,N-trimethyl-L-alanyl-L-prolyl-L-lysyl-[protein] + 3 S-adenosyl-L-homocysteine + 3 H(+). It catalyses the reaction N-terminal L-seryl-L-prolyl-L-lysyl-[protein] + 3 S-adenosyl-L-methionine = N-terminal N,N,N-trimethyl-L-seryl-L-prolyl-L-lysyl-[protein] + 3 S-adenosyl-L-homocysteine + 3 H(+). The enzyme catalyses N-terminal L-prolyl-L-prolyl-L-lysyl-[protein] + 2 S-adenosyl-L-methionine = N-terminal N,N-dimethyl-L-prolyl-L-prolyl-L-lysyl-[protein] + 2 S-adenosyl-L-homocysteine + 2 H(+). In terms of biological role, alpha-N-methyltransferase that methylates the N-terminus of target proteins containing the N-terminal motif [Ala/Pro/Ser]-Pro-Lys when the initiator Met is cleaved. Specifically catalyzes mono-, di- or tri-methylation of exposed alpha-amino group of Ala or Ser residue in the [Ala/Ser]-Pro-Lys motif and mono- or di-methylation of Pro in the Pro-Pro-Lys motif. Probably required for the synthesis of neurotransmitter melatonin from serotonin, which plays a role in promoting a sleep-like state, called lethargus, during larval development. The polypeptide is Alpha N-terminal protein methyltransferase 1 (Caenorhabditis elegans).